The sequence spans 321 residues: MFQNNYNNNTNYNNNNFKLNDGNQIPSIGLGTYYSENPGEVGDAINNALKNGYRHIDGAAFYGNEKVIGNSLKEIFKEGEIKREDIFYTSKLWNSCHNSNLVVKHCVKTIEDLGIGYLDLYLIHWPIAFENSNPLGLTIEPLRDQNGNPIIAPVSIRETWQEMEKLVELGLVKSIGVSNFNVQNLVDLLTYAKIKPVVNQVEIHPYLTQFKLQEYCDKYEIKLVAYSPLGQGKCDFFSNKILKSIAGKYKKSVANVIFKWLNQRGIAAIPKSGNHSRIIENFNIFDFQLSNDDIEKINSLNANIRTCSPITFFGTPFYLFD.

22 to 31 serves as a coordination point for NADP(+); it reads GNQIPSIGLG. The active-site Proton donor is the Tyr-62. His-124 serves as a coordination point for substrate. 227 to 281 is a binding site for NADP(+); sequence SPLGQGKCDFFSNKILKSIAGKYKKSVANVIFKWLNQRGIAAIPKSGNHSRIIEN.

This sequence belongs to the aldo/keto reductase family.

It carries out the reaction an alditol + NAD(+) = an aldose + NADH + H(+). The catalysed reaction is an alditol + NADP(+) = an aldose + NADPH + H(+). In terms of biological role, catalyzes the NADPH-dependent reduction of a wide variety of carbonyl-containing compounds to their corresponding alcohols with a broad range of catalytic efficiencies. In Dictyostelium discoideum (Social amoeba), this protein is Aldose reductase C (alrC).